Here is a 355-residue protein sequence, read N- to C-terminus: 3-isopropylmalate dehydrogenase (355 aa).

Substrate contacts are provided by Arg98, Arg108, Arg132, and Asp223. Residues Asp223, Asp247, and Asp251 each coordinate Mg(2+). NAD(+) is bound at residue 283-295; the sequence is GSAPDIAGQQKAD.

The protein belongs to the isocitrate and isopropylmalate dehydrogenases family. LeuB type 2 subfamily. As to quaternary structure, homodimer. It depends on Mg(2+) as a cofactor. Mn(2+) serves as cofactor.

The protein localises to the cytoplasm. The catalysed reaction is (2R,3S)-3-isopropylmalate + NAD(+) = 4-methyl-2-oxopentanoate + CO2 + NADH. It functions in the pathway amino-acid biosynthesis; L-leucine biosynthesis; L-leucine from 3-methyl-2-oxobutanoate: step 3/4. Functionally, catalyzes the oxidation of 3-carboxy-2-hydroxy-4-methylpentanoate (3-isopropylmalate) to 3-carboxy-4-methyl-2-oxopentanoate. The product decarboxylates to 4-methyl-2 oxopentanoate. The polypeptide is 3-isopropylmalate dehydrogenase (Clavibacter sepedonicus (Clavibacter michiganensis subsp. sepedonicus)).